The sequence spans 501 residues: Beta-secretase 1 (501 aa).

A signal peptide spans 1 to 21 (MAQALPWLLLWMGSGVLPAHG). Positions 22–45 (SQPGIRLPLRSGLGGAPLGLRLPR) are excised as a propeptide. Topologically, residues 22–457 (SQPGIRLPLR…PQTDESTLMT (436 aa)) are extracellular. The segment at 39–58 (LGLRLPRETDEESEEPGRRG) is disordered. Residues 75–416 (YYVEMTLGSP…DRARKRIGFA (342 aa)) enclose the Peptidase A1 domain. Residue Asp93 is part of the active site. N6-acetyllysine is present on Lys126. N-linked (GlcNAc...) asparagine glycosylation is found at Asn153, Asn172, and Asn223. 3 disulfides stabilise this stretch: Cys216–Cys420, Cys278–Cys443, and Cys330–Cys380. Lys275, Lys279, and Lys285 each carry N6-acetyllysine. Residue Asp289 is part of the active site. Lys299, Lys300, and Lys307 each carry N6-acetyllysine. N-linked (GlcNAc...) asparagine glycosylation occurs at Asn354. The helical transmembrane segment at 458 to 478 (IAYVMAAICALFMLPLCLMVC) threads the bilayer. 4 S-palmitoyl cysteine lipidation sites follow: Cys474, Cys478, Cys482, and Cys485. The Cytoplasmic segment spans residues 479–501 (QWRCLRCLRHQHDDFADDISLLK). The segment at 479–501 (QWRCLRCLRHQHDDFADDISLLK) is interaction with RTN3. The DXXLL signature appears at 496–500 (DISLL). The residue at position 498 (Ser498) is a Phosphoserine. Lys501 participates in a covalent cross-link: Glycyl lysine isopeptide (Lys-Gly) (interchain with G-Cter in ubiquitin).

The protein belongs to the peptidase A1 family. In terms of assembly, monomer. Interacts (via DXXLL motif) with GGA1, GGA2 and GGA3 (via their VHS domain); the interaction highly increases when BACE1 is phosphorylated at Ser-498. Interacts with RTN1; RTN2; RTN3 and RTN4; the interaction leads to inhibition of amyloid precursor protein processing. Interacts with SNX6. Interacts with PCSK9. Interacts with NAT8 and NAT8B. Interacts with BIN1. Interacts (via extracellular domain) with ADAM10 (via extracellular domain). Interacts with SORL1; this interaction may affect binding with APP and hence reduce APP cleavage. Interacts with NRDC AND NRG1. Post-translationally, palmitoylation mediates lipid raft localization. In terms of processing, acetylated in the endoplasmic reticulum at Lys-126, Lys-275, Lys-279, Lys-285, Lys-299, Lys-300 and Lys-307. Acetylation by NAT8 and NAT8B is transient and deacetylation probably occurs in the Golgi. Acetylation regulates the maturation, the transport to the plasma membrane, the stability and the expression of the protein. Ubiquitinated at Lys-501, ubiquitination leads to lysosomal degradation. Monoubiquitinated and 'Lys-63'-linked polyubitinated. Deubiquitnated by USP8; inhibits lysosomal degradation. Post-translationally, phosphorylation at Ser-498 is required for interaction with GGA1 and retrograded transport from endosomal compartments to the trans-Golgi network. Non-phosphorylated BACE1 enters a direct recycling route to the cell surface. In terms of processing, N-Glycosylated. Addition of a bisecting N-acetylglucosamine by MGAT3 blocks lysosomal targeting, further degradation and is required for maintaining stability under stress conditions.

It localises to the cell membrane. The protein localises to the golgi apparatus. Its subcellular location is the trans-Golgi network. The protein resides in the endoplasmic reticulum. It is found in the endosome. It localises to the cell surface. The protein localises to the cytoplasmic vesicle membrane. Its subcellular location is the membrane raft. The protein resides in the lysosome. It is found in the late endosome. It localises to the early endosome. The protein localises to the recycling endosome. Its subcellular location is the cell projection. The protein resides in the axon. It is found in the dendrite. It carries out the reaction Broad endopeptidase specificity. Cleaves Glu-Val-Asn-Leu-|-Asp-Ala-Glu-Phe in the Swedish variant of Alzheimer's amyloid precursor protein.. With respect to regulation, inhibited by RTN3 and RTN4. In terms of biological role, responsible for the proteolytic processing of the amyloid precursor protein (APP). Cleaves at the N-terminus of the A-beta peptide sequence, between residues 671 and 672 of APP, leads to the generation and extracellular release of beta-cleaved soluble APP, and a corresponding cell-associated C-terminal fragment which is later released by gamma-secretase. Cleaves CHL1. The polypeptide is Beta-secretase 1 (BACE1) (Bos taurus (Bovine)).